Here is a 330-residue protein sequence, read N- to C-terminus: Aspartate--ammonia ligase (330 aa).

This sequence belongs to the class-II aminoacyl-tRNA synthetase family. AsnA subfamily.

Its subcellular location is the cytoplasm. The catalysed reaction is L-aspartate + NH4(+) + ATP = L-asparagine + AMP + diphosphate + H(+). Its pathway is amino-acid biosynthesis; L-asparagine biosynthesis; L-asparagine from L-aspartate (ammonia route): step 1/1. This is Aspartate--ammonia ligase from Escherichia coli O8 (strain IAI1).